A 131-amino-acid polypeptide reads, in one-letter code: Small ribosomal subunit protein uS8 (131 aa).

The protein belongs to the universal ribosomal protein uS8 family. As to quaternary structure, part of the 30S ribosomal subunit. Contacts proteins S5 and S12.

Functionally, one of the primary rRNA binding proteins, it binds directly to 16S rRNA central domain where it helps coordinate assembly of the platform of the 30S subunit. The polypeptide is Small ribosomal subunit protein uS8 (Wolinella succinogenes (strain ATCC 29543 / DSM 1740 / CCUG 13145 / JCM 31913 / LMG 7466 / NCTC 11488 / FDC 602W) (Vibrio succinogenes)).